Consider the following 1325-residue polypeptide: Protein suppressor of sable (1325 aa).

2 disordered regions span residues 1-36 (MSVALADEPLIDLEEDLEDGEIDDDEEDEQQSSKIQ) and 74-326 (VCLQ…GGSN). The span at 9-30 (PLIDLEEDLEDGEIDDDEEDEQ) shows a compositional bias: acidic residues. Residues 119 to 131 (RSSNQDTSDQSLE) are compositionally biased toward polar residues. The tract at residues 138 to 327 (ATANPLLQST…GQEKMGGSNR (190 aa)) is highly charged. Residues 149–158 (SSRRRKRKKE) are compositionally biased toward basic residues. A coiled-coil region spans residues 149-179 (SSRRRKRKKEREREQKKDKEQQNRSRRDEND). The segment covering 159-178 (REREQKKDKEQQNRSRRDEN) has biased composition (basic and acidic residues). Positions 236–246 (AGLGAGGGGGY) are enriched in gly residues. A coiled-coil region spans residues 276–296 (NEKEHQRGVNNRKRRDRDRLE). 2 consecutive C3H1-type zinc fingers follow at residues 330–357 (PRKLELCKFYLMDCCAKRDKCSYMHKEF) and 358–381 (PCKYYYLGMDCYAGDDCLFYHGEP). Residues 444-478 (KRQDHQMQQQQQQLQHQQLQQQQEQQQTQQQAAAD) adopt a coiled-coil conformation. Over residues 499–509 (KRKSRWTEKMG) the composition is skewed to basic and acidic residues. 8 disordered regions span residues 499 to 535 (KRKSRWTEKMGAKAAAGAAGSSERDSTSPDAKPLPPH), 588 to 622 (KAEDAKPQTQAELESSTPPSKRETEANNSNSKSNG), 639 to 695 (FSGN…PSVF), 710 to 745 (SARQLLPASATSPNQENAHLPGGDQSTHKSAPIGGG), 780 to 835 (AHSG…ALPP), 979 to 1058 (DLET…GGSK), 1143 to 1170 (EPNGNGAALGGGGDSGGGVGGGGGGGGV), and 1295 to 1325 (RGGHFPGGGSGGNGNGNNRNQRGGNHRNRNI). Ser-524 carries the post-translational modification Phosphoserine. Residues 594 to 606 (PQTQAELESSTPP) show a composition bias toward polar residues. Residue Thr-604 is modified to Phosphothreonine. Residues 644–668 (PLDDDRDDDEQLIIDDGNDSTAEED) show a composition bias toward acidic residues. Ser-663 carries the phosphoserine modification. At Thr-664 the chain carries Phosphothreonine. Polar residues predominate over residues 710–726 (SARQLLPASATSPNQEN). Low complexity predominate over residues 790-800 (SNENSNSNSHS). Over residues 1003–1015 (SVPPPSMRVPPPN) the composition is skewed to pro residues. A compositionally biased stretch (basic and acidic residues) spans 1021–1033 (PTVRTDPRRDPRR). A compositionally biased stretch (low complexity) spans 1042-1056 (GASTANTTAPNASGG). Gly residues-rich tracts occupy residues 1149–1170 (AALGGGGDSGGGVGGGGGGGGV) and 1295–1309 (RGGHFPGGGSGGNGN).

The protein belongs to the suppressor of sable family. As to quaternary structure, interacts with Wdr82.

It is found in the nucleus. It localises to the chromosome. Functionally, RNA-binding protein that suppresses transcription of some RNAs. Together with Wdr82, part of a transcription termination checkpoint that promotes transcription termination of RNAs and their subsequent degradation by the nuclear exosome. Promotes transcription termination of aberrant RNAs, transcripts from genes containing a transposon inserted at their very 5' end or RNAs from heat-shock-inducible repetitive element. Binds RNA preferentially at a sequence that resembles a cryptic 5'-splice site. The sequence is that of Protein suppressor of sable from Drosophila melanogaster (Fruit fly).